The sequence spans 99 residues: Integration host factor subunit alpha (99 aa).

The interval 49–75 is disordered; that stretch reads FGNFDLRDKNQRPGRNPKTGEDIPITA.

This sequence belongs to the bacterial histone-like protein family. As to quaternary structure, heterodimer of an alpha and a beta chain.

Functionally, this protein is one of the two subunits of integration host factor, a specific DNA-binding protein that functions in genetic recombination as well as in transcriptional and translational control. The polypeptide is Integration host factor subunit alpha (Salmonella agona (strain SL483)).